A 99-amino-acid chain; its full sequence is uncharacterized protein (99 aa).

Residues 43–95 (ENEEIYADQVRRIKLRLRELRETYATSEDNWRELMDNLEELRDQIERLAIRGG) are a coiled coil.

This is an uncharacterized protein from Archaeoglobus fulgidus (strain ATCC 49558 / DSM 4304 / JCM 9628 / NBRC 100126 / VC-16).